A 25-amino-acid chain; its full sequence is Hemocyanin subunit 3 (25 aa).

This sequence belongs to the tyrosinase family. Hemocyanin subfamily. Hemolymph.

It localises to the secreted. It is found in the extracellular space. Its function is as follows. Hemocyanins are copper-containing oxygen carriers occurring freely dissolved in the hemolymph of many mollusks and arthropods. This chain is Hemocyanin subunit 3, found in Maja squinado (Mediterranean spider crab).